Reading from the N-terminus, the 400-residue chain is Acetate kinase (400 aa).

Residue Asn10 participates in Mg(2+) binding. Lys17 is an ATP binding site. Arg91 is a binding site for substrate. The active-site Proton donor/acceptor is the Asp150. ATP contacts are provided by residues 210 to 214, 285 to 287, and 333 to 337; these read HLGNG, DCR, and GIGEN. Glu387 contacts Mg(2+).

Belongs to the acetokinase family. In terms of assembly, homodimer. It depends on Mg(2+) as a cofactor. Requires Mn(2+) as cofactor.

The protein localises to the cytoplasm. It carries out the reaction acetate + ATP = acetyl phosphate + ADP. It functions in the pathway metabolic intermediate biosynthesis; acetyl-CoA biosynthesis; acetyl-CoA from acetate: step 1/2. Its function is as follows. Catalyzes the formation of acetyl phosphate from acetate and ATP. Can also catalyze the reverse reaction. In Photorhabdus laumondii subsp. laumondii (strain DSM 15139 / CIP 105565 / TT01) (Photorhabdus luminescens subsp. laumondii), this protein is Acetate kinase.